We begin with the raw amino-acid sequence, 423 residues long: Sulfate adenylyltransferase (423 aa).

Sulfate is bound by residues Gln-207 and Arg-209. ATP-binding positions include 207 to 210 (QLRN) and 301 to 304 (GRDH). Residues Arg-209 and Asn-210 contribute to the active site. Residue Ala-305 coordinates sulfate.

This sequence belongs to the sulfate adenylyltransferase family.

Its subcellular location is the mitosome. It carries out the reaction sulfate + ATP + H(+) = adenosine 5'-phosphosulfate + diphosphate. The protein operates within sulfur metabolism; hydrogen sulfide biosynthesis; sulfite from sulfate: step 1/3. Functionally, catalyzes the first intracellular reaction of sulfate assimilation, forming adenosine-5'-phosphosulfate (APS) from inorganic sulfate and ATP. The protein is Sulfate adenylyltransferase of Entamoeba histolytica (strain ATCC 30459 / HM-1:IMSS / ABRM).